Reading from the N-terminus, the 541-residue chain is Arginine--tRNA ligase (541 aa).

A 'HIGH' region motif is present at residues 119–129; sequence ANPTGPLHIGH.

The protein belongs to the class-I aminoacyl-tRNA synthetase family. As to quaternary structure, monomer.

Its subcellular location is the cytoplasm. It carries out the reaction tRNA(Arg) + L-arginine + ATP = L-arginyl-tRNA(Arg) + AMP + diphosphate. The sequence is that of Arginine--tRNA ligase from Helicobacter pylori (strain G27).